Reading from the N-terminus, the 506-residue chain is MNTMTLTPGQLSLSQLYDVWRHPVQLRLDASAIDGINASVACVNDIVAEGRTAYGINTGFGLLAQTRIADEDLQNLQRSLVLSHAAGVGDPLDDAMVRLIMVLKINSLARGFSGIRLSVIEALIALVNAGVYPLIPAKGSVGASGDLAPLAHLSLTLLGEGKARWQGEWLPAQAALKKAGLEPVALAAKEGLALLNGTQASTAFALRGLFEAQELFASAVVCGALTTEAVLGSRRPFDARIHAARGQQGQIDAARLFRHLLTDTSAIAESHHHCHKVQDPYSLRCQPQVMGACLTQLRQTKEVLLAEANAVSDNPLVFADAGEVISGGNFHAEPVAMAADNLALAIAEIGALSERRIALMMDKHMSQLPPFLVKNGGVNSGFMIAQVTAAALASENKALAHPHSVDSLPTSANQEDHVSMAPAAGRRLWEMAANTRGIIAVEWLAACQGIDLREGLTSSPLLEQARQTLRERVAHYTQDRFFAPDIECATTLLAQGALQRLLPDFM.

The 5-imidazolinone (Ala-Gly) cross-link spans 143-145 (ASG). Residue Ser-144 is modified to 2,3-didehydroalanine (Ser).

This sequence belongs to the PAL/histidase family. In terms of processing, contains an active site 4-methylidene-imidazol-5-one (MIO), which is formed autocatalytically by cyclization and dehydration of residues Ala-Ser-Gly.

It localises to the cytoplasm. It carries out the reaction L-histidine = trans-urocanate + NH4(+). Its pathway is amino-acid degradation; L-histidine degradation into L-glutamate; N-formimidoyl-L-glutamate from L-histidine: step 1/3. The sequence is that of Histidine ammonia-lyase from Salmonella paratyphi A (strain ATCC 9150 / SARB42).